We begin with the raw amino-acid sequence, 435 residues long: ATP-dependent protease ATPase subunit HslU (435 aa).

ATP is bound by residues I18, G60–E65, D248, E313, and R385.

Belongs to the ClpX chaperone family. HslU subfamily. In terms of assembly, a double ring-shaped homohexamer of HslV is capped on each side by a ring-shaped HslU homohexamer. The assembly of the HslU/HslV complex is dependent on binding of ATP.

The protein resides in the cytoplasm. In terms of biological role, ATPase subunit of a proteasome-like degradation complex; this subunit has chaperone activity. The binding of ATP and its subsequent hydrolysis by HslU are essential for unfolding of protein substrates subsequently hydrolyzed by HslV. HslU recognizes the N-terminal part of its protein substrates and unfolds these before they are guided to HslV for hydrolysis. The sequence is that of ATP-dependent protease ATPase subunit HslU from Ruegeria pomeroyi (strain ATCC 700808 / DSM 15171 / DSS-3) (Silicibacter pomeroyi).